The chain runs to 787 residues: Endonuclease MutS2 (787 aa).

Gly-329 to Thr-336 lines the ATP pocket. The Smr domain maps to Ile-712–Lys-787.

This sequence belongs to the DNA mismatch repair MutS family. MutS2 subfamily. Homodimer. Binds to stalled ribosomes, contacting rRNA.

Endonuclease that is involved in the suppression of homologous recombination and thus may have a key role in the control of bacterial genetic diversity. Its function is as follows. Acts as a ribosome collision sensor, splitting the ribosome into its 2 subunits. Detects stalled/collided 70S ribosomes which it binds and splits by an ATP-hydrolysis driven conformational change. Acts upstream of the ribosome quality control system (RQC), a ribosome-associated complex that mediates the extraction of incompletely synthesized nascent chains from stalled ribosomes and their subsequent degradation. Probably generates substrates for RQC. The protein is Endonuclease MutS2 of Lachnospira eligens (strain ATCC 27750 / DSM 3376 / VPI C15-48 / C15-B4) (Eubacterium eligens).